Consider the following 491-residue polypeptide: Delayed-rectifier potassium channel regulatory subunit KCNS3 (491 aa).

Topologically, residues 1 to 182 (MVFGEFFHRP…IRMENPAYCL (182 aa)) are cytoplasmic. The chain crosses the membrane as a helical span at residues 183–204 (SAKLIAISSLSVVLASIVAMCV). The Extracellular portion of the chain corresponds to 205 to 220 (HSMSEFQNEDGEVDDP). The chain crosses the membrane as a helical span at residues 221–243 (VLEGVEIACIAWFTGELAVRLAA). Residues 244–254 (APCQKKFWKNP) are Cytoplasmic-facing. A helical membrane pass occupies residues 255–275 (LNIIDFVSIIPFYATLAVDTK). At 276–285 (EEESEDIENM) the chain is on the extracellular side. A helical; Voltage-sensor transmembrane segment spans residues 286-306 (GKVVQILRLMRIFRILKLARH). The Cytoplasmic segment spans residues 307 to 321 (SVGLRSLGATLRHSY). Residues 322–343 (HEVGLLLLFLSVGISIFSVLIY) traverse the membrane as a helical segment. The Extracellular portion of the chain corresponds to 344–357 (SVEKDDHTSSLTSI). Residues 358 to 369 (PICWWWATISMT) constitute an intramembrane region (helical). The short motif at 370 to 375 (TVGYGD) is the Selectivity filter element. The stretch at 370 to 377 (TVGYGDTH) is an intramembrane region. Topologically, residues 378–384 (PVTLAGK) are extracellular. Residues 385 to 413 (LIASTCIICGILVVALPITIIFNKFSKYY) traverse the membrane as a helical segment. Over 414 to 491 (QKQKDIDVDQ…TTSLENCTAK (78 aa)) the chain is Cytoplasmic.

It belongs to the potassium channel family. S (TC 1.A.1.2) subfamily. Kv9.3/KCNS3 sub-subfamily. Heterotetramer with KCNB1. Does not form homomultimers. Detected in whole normal term placental and placental chorionic plate arteries and veins. Detected in syncytiotrophoblast and in blood vessel endothelium within intermediate villi and chorionic plate (at protein level). Detected in most tissues, but not in peripheral blood lymphocytes. The highest levels of expression are in lung.

The protein resides in the cell membrane. Its function is as follows. Potassium channel regulatory subunit that modulates the delayed rectifier potassium channel activity of KCNB1 by namely slowing down the deactivation and inactivation time constants. While it does not form functional channel on its own, it can form functional heterotetrameric channels with KCNB1. The polypeptide is Delayed-rectifier potassium channel regulatory subunit KCNS3 (Homo sapiens (Human)).